The primary structure comprises 223 residues: CKLF-like MARVEL transmembrane domain-containing protein 5 (223 aa).

The MARVEL domain maps to 29–213 (FLTSHKGILL…DAFKIYRTEM (185 aa)). A run of 4 helical transmembrane segments spans residues 35-55 (GILL…FTAS), 56-76 (ISAY…FLFL), 162-182 (FLRC…AVTS), and 186-206 (AAIA…YDAF).

It belongs to the chemokine-like factor family. As to expression, highly expressed in the brain.

It is found in the membrane. This Homo sapiens (Human) protein is CKLF-like MARVEL transmembrane domain-containing protein 5 (CMTM5).